The following is a 310-amino-acid chain: 4-hydroxyproline epimerase (310 aa).

C88 serves as the catalytic Proton acceptor. Substrate-binding positions include 89 to 90 (GH), H208, and D232. The active-site Proton donor is the C236. Residue 237-238 (GT) participates in substrate binding.

This sequence belongs to the proline racemase family. As to quaternary structure, homodimer.

It carries out the reaction trans-4-hydroxy-L-proline = cis-4-hydroxy-D-proline. Inhibited by iodoacetate, iodoacetamide and by high amounts (10 mM) of pyrrole-2-carboxylic acid (PYC). Not inhibited by PYC at 1 mM. In terms of biological role, allows intracellular utilization of 4-hydroxyproline, one of the major constituents of host collagen, by converting 4-hydroxy-L-proline to 4-hydroxy-D-proline, which can be further metabolized by intracellular 4-hydroxy-D-proline oxidases. This Burkholderia pseudomallei (strain K96243) protein is 4-hydroxyproline epimerase.